We begin with the raw amino-acid sequence, 142 residues long: MALSAEDRALVRALWKKLGSNVGVYTTEALERTFLAFPATKTYFSHLDLSPGSSQVRAHGQKVADALSLAVERLDDLPHALSALSHLHACQLRVDPASFQLLGHCLLVTLARHYPGDFSPALQASLDKFLSHVISALVSEYR.

A Globin domain is found at A2–R142. Residues H59 and H88 each contribute to the heme b site.

This sequence belongs to the globin family.

The chain is Hemoglobin subunit theta-1 (HBQ1) from Homo sapiens (Human).